Here is a 30-residue protein sequence, read N- to C-terminus: Phospholemman-like protein (30 aa).

This sequence belongs to the FXYD family. Phosphorylated by protein kinase a (PK-A) and protein kinase C (PK-C). Phosphorylated in response to insulin and adrenergic stimulation.

Its subcellular location is the microsome membrane. The protein resides in the endoplasmic reticulum membrane. Functionally, induces a hyperpolarization-activated chloride current when expressed in Xenopus oocytes. May have a functional role in muscle contraction. The sequence is that of Phospholemman-like protein from Squalus acanthias (Spiny dogfish).